A 614-amino-acid polypeptide reads, in one-letter code: Protein B602L (614 aa).

31 repeat units span residues C161–T164, N165–T168, S169–T172, N173–T176, S177–T180, N181–I184, N185–T188, N189–T192, C193–T196, N197–T200, N201–T204, N205–I208, N209–T212, N213–T216, N217–T220, N221–T224, N225–I228, N229–T232, N233–T236, C237–T240, N241–T244, N245–T248, N249–I252, N253–T256, N257–T260, N261–T264, N265–I268, N269–T272, N273–I276, N277–I280, and N281–T284. Residues C161 to T284 are 28 X 4 AA tandem repeats of [CNS]-[AV]-[DNS]-[IT].

Belongs to the asfivirus B602L family.

Its subcellular location is the host cytoplasm. Its function is as follows. Plays an essential role in the assembly of the icosahedral capsid of the virus. Allows the assembly of 3 molecules of hexon protein p72 and formation of a thermostable trimer. The polypeptide is Protein B602L (African swine fever virus (isolate Tick/Malawi/Lil 20-1/1983) (ASFV)).